The chain runs to 215 residues: Variable small protein 6 (215 aa).

Residues Met-1 to Ser-18 form the signal peptide. Residue Cys-19 is the site of N-palmitoyl cysteine attachment. Residue Cys-19 is the site of S-diacylglycerol cysteine attachment.

The protein belongs to the variable small protein (Vsp) family.

The protein resides in the cell outer membrane. In terms of biological role, the Vlp and Vsp proteins are antigenically distinct proteins, only one vlp or vsp gene is transcriptionally active at any one time. Switching between these genes is a mechanism of host immune response evasion. In Borrelia hermsii, this protein is Variable small protein 6.